We begin with the raw amino-acid sequence, 933 residues long: Collagen alpha-2(I) chain (933 aa).

Gly residues predominate over residues 1–16 (SGGFDFGVGLGPGPMG). Disordered regions lie at residues 1–191 (SGGF…LTGA) and 206–933 (LPGP…AGVR). A compositionally biased stretch (low complexity) spans 17–53 (LMGPRGPPGASGAPGPQGFQGPAGEPGEPGQTGPAGA). Pro24 and Pro30 each carry 4-hydroxyproline. Positions 57 to 72 (KAGEDGHPGKPGRPGE) are enriched in basic and acidic residues. Lys94 is subject to 5-hydroxylysine; alternate. An O-linked (Gal...) hydroxylysine; alternate glycan is attached at Lys94. Low complexity-rich tracts occupy residues 108–137 (VGAP…SAGP), 162–176 (AGPR…VSGP), and 213–228 (PGPV…RGLV). Gly residues predominate over residues 280–289 (GLRGGPGSRG). A 4-hydroxyproline mark is found at Pro317 and Pro320. Residues 413 to 422 (GVQGGKGEQG) show a composition bias toward gly residues. Composition is skewed to low complexity over residues 468–485 (PGES…SRGP) and 497–507 (EPGVVGAPGTA). The span at 508-517 (GPAGSGGLPG) shows a compositional bias: gly residues. Composition is skewed to low complexity over residues 540-584 (VGTT…PRGS), 591-611 (VGPA…QPGA), and 627-640 (PTGP…SGPN). The segment covering 644–656 (GPAGGRGDGGPPG) has biased composition (gly residues). Residues 657 to 667 (LTGFPGAAGRT) are compositionally biased toward low complexity. The segment covering 704 to 713 (GETGAGGPPG) has biased composition (gly residues). 2 stretches are compositionally biased toward low complexity: residues 721 to 748 (SGEP…LGLP) and 756 to 781 (LPGV…RGPS). The segment covering 795–807 (AGRDGLPGHKGER) has biased composition (basic and acidic residues). 2 stretches are compositionally biased toward low complexity: residues 809-831 (YAGN…VGPA) and 840-860 (PGPA…PSGP). A compositionally biased stretch (basic and acidic residues) spans 864–874 (RGDKGEGDKGP).

It belongs to the fibrillar collagen family. As to quaternary structure, trimers of one alpha 2(I) and two alpha 1(I) chains. Interacts (via C-terminus) with TMEM131 (via PapD-L domain); the interaction is direct and is involved in assembly and TRAPPIII ER-to-Golgi transport complex-dependent secretion of collagen. Post-translationally, prolines at the third position of the tripeptide repeating unit (G-X-Y) are hydroxylated in some or all of the chains. In terms of tissue distribution, expressed in bones.

The protein resides in the secreted. It is found in the extracellular space. It localises to the extracellular matrix. Type I collagen is a member of group I collagen (fibrillar forming collagen). This chain is Collagen alpha-2(I) chain, found in Glyptodon sp. (strain SLP-2019) (Giant armadillo).